We begin with the raw amino-acid sequence, 167 residues long: NADH-quinone oxidoreductase subunit B (167 aa).

Residues Cys-48, Cys-49, Cys-113, and Cys-143 each coordinate [4Fe-4S] cluster.

This sequence belongs to the complex I 20 kDa subunit family. NDH-1 is composed of 14 different subunits. Subunits NuoB, C, D, E, F, and G constitute the peripheral sector of the complex. Requires [4Fe-4S] cluster as cofactor.

The protein resides in the cell membrane. The catalysed reaction is a quinone + NADH + 5 H(+)(in) = a quinol + NAD(+) + 4 H(+)(out). Its function is as follows. NDH-1 shuttles electrons from NADH, via FMN and iron-sulfur (Fe-S) centers, to quinones in the respiratory chain. Couples the redox reaction to proton translocation (for every two electrons transferred, four hydrogen ions are translocated across the cytoplasmic membrane), and thus conserves the redox energy in a proton gradient. The polypeptide is NADH-quinone oxidoreductase subunit B (Wolbachia pipientis subsp. Culex pipiens (strain wPip)).